Here is a 128-residue protein sequence, read N- to C-terminus: MESYQNQSGAQQTHQQLDQFGNPFPATTGAYGTAGGAPAVAEGGGLSGMLHRSGSSSSSSSEDDGLGGRRRKKKGITEKIKEKLPGHHDSNKTSSLGSTTTAYDTGTVHHEKKGMMEKIKEKLPGGHH.

The segment covering 1–19 (MESYQNQSGAQQTHQQLDQ) has biased composition (polar residues). The tract at residues 1–128 (MESYQNQSGA…IKEKLPGGHH (128 aa)) is disordered. Low complexity-rich tracts occupy residues 23-41 (PFPA…PAVA) and 48-60 (GMLH…SSSS). The span at 75–91 (GITEKIKEKLPGHHDSN) shows a compositional bias: basic and acidic residues. Polar residues predominate over residues 92-104 (KTSSLGSTTTAYD). Positions 107 to 128 (TVHHEKKGMMEKIKEKLPGGHH) are enriched in basic and acidic residues.

This sequence belongs to the plant dehydrin family.

The sequence is that of Dehydrin Xero 1 (XERO1) from Arabidopsis thaliana (Mouse-ear cress).